A 219-amino-acid polypeptide reads, in one-letter code: 7-cyano-7-deazaguanine synthase (219 aa).

ATP is bound at residue 10-20 (FSGGQDSTTCL). Zn(2+) contacts are provided by Cys-186, Cys-195, Cys-198, and Cys-201.

This sequence belongs to the QueC family. As to quaternary structure, homodimer. Zn(2+) is required as a cofactor.

The enzyme catalyses 7-carboxy-7-deazaguanine + NH4(+) + ATP = 7-cyano-7-deazaguanine + ADP + phosphate + H2O + H(+). Its pathway is purine metabolism; 7-cyano-7-deazaguanine biosynthesis. Its function is as follows. Catalyzes the ATP-dependent conversion of 7-carboxy-7-deazaguanine (CDG) to 7-cyano-7-deazaguanine (preQ(0)). The polypeptide is 7-cyano-7-deazaguanine synthase (Bacillus licheniformis (strain ATCC 14580 / DSM 13 / JCM 2505 / CCUG 7422 / NBRC 12200 / NCIMB 9375 / NCTC 10341 / NRRL NRS-1264 / Gibson 46)).